The primary structure comprises 555 residues: 2-succinyl-5-enolpyruvyl-6-hydroxy-3-cyclohexene-1-carboxylate synthase (555 aa).

This sequence belongs to the TPP enzyme family. MenD subfamily. As to quaternary structure, homodimer. Requires Mg(2+) as cofactor. Mn(2+) serves as cofactor. The cofactor is thiamine diphosphate.

The catalysed reaction is isochorismate + 2-oxoglutarate + H(+) = 5-enolpyruvoyl-6-hydroxy-2-succinyl-cyclohex-3-ene-1-carboxylate + CO2. It functions in the pathway quinol/quinone metabolism; 1,4-dihydroxy-2-naphthoate biosynthesis; 1,4-dihydroxy-2-naphthoate from chorismate: step 2/7. It participates in quinol/quinone metabolism; menaquinone biosynthesis. Its function is as follows. Catalyzes the thiamine diphosphate-dependent decarboxylation of 2-oxoglutarate and the subsequent addition of the resulting succinic semialdehyde-thiamine pyrophosphate anion to isochorismate to yield 2-succinyl-5-enolpyruvyl-6-hydroxy-3-cyclohexene-1-carboxylate (SEPHCHC). This is 2-succinyl-5-enolpyruvyl-6-hydroxy-3-cyclohexene-1-carboxylate synthase from Bacteroides thetaiotaomicron (strain ATCC 29148 / DSM 2079 / JCM 5827 / CCUG 10774 / NCTC 10582 / VPI-5482 / E50).